A 248-amino-acid chain; its full sequence is UPF0736 protein BCG9842_B4111 (248 aa).

Belongs to the UPF0736 family.

This Bacillus cereus (strain G9842) protein is UPF0736 protein BCG9842_B4111.